Consider the following 299-residue polypeptide: ATP phosphoribosyltransferase (299 aa).

It belongs to the ATP phosphoribosyltransferase family. Long subfamily. The cofactor is Mg(2+).

It localises to the cytoplasm. The catalysed reaction is 1-(5-phospho-beta-D-ribosyl)-ATP + diphosphate = 5-phospho-alpha-D-ribose 1-diphosphate + ATP. The protein operates within amino-acid biosynthesis; L-histidine biosynthesis; L-histidine from 5-phospho-alpha-D-ribose 1-diphosphate: step 1/9. With respect to regulation, feedback inhibited by histidine. Functionally, catalyzes the condensation of ATP and 5-phosphoribose 1-diphosphate to form N'-(5'-phosphoribosyl)-ATP (PR-ATP). Has a crucial role in the pathway because the rate of histidine biosynthesis seems to be controlled primarily by regulation of HisG enzymatic activity. This is ATP phosphoribosyltransferase from Actinobacillus pleuropneumoniae serotype 5b (strain L20).